A 352-amino-acid polypeptide reads, in one-letter code: Protein Wnt-3a (352 aa).

Residues 1 to 18 (MAPLGYLLVLCSLKQALG) form the signal peptide. Cystine bridges form between cysteine 77–cysteine 88, cysteine 128–cysteine 136, cysteine 138–cysteine 155, cysteine 203–cysteine 217, cysteine 205–cysteine 212, cysteine 281–cysteine 312, cysteine 297–cysteine 307, cysteine 311–cysteine 351, cysteine 327–cysteine 342, cysteine 329–cysteine 339, and cysteine 334–cysteine 335. Asparagine 87 carries N-linked (GlcNAc...) asparagine glycosylation. Serine 209 carries the O-palmitoleoyl serine; by PORCN lipid modification. A glycan (N-linked (GlcNAc...) asparagine) is linked at asparagine 298.

This sequence belongs to the Wnt family. In terms of assembly, forms a soluble 1:1 complex with AFM; this prevents oligomerization and is required for prolonged biological activity. The complex with AFM may represent the physiological form in body fluids. Homooligomer; disulfide-linked, leading to inactivation. Interacts with APCDD1 and WLS. Component of the Wnt-Fzd-LRP5-LRP6 signaling complex that contains a WNT protein, a FZD protein and LRP5 or LRP6. Interacts directly in the complex with LRP6. Interacts with PORCN. Interacts with glypican GPC3. Interacts with PKD1 (via extracellular domain). Interacts with FZD5. In terms of processing, proteolytic processing by TIKI1 and TIKI2 promotes oxidation and formation of large disulfide-bond oligomers, leading to inactivation of WNT3A. Post-translationally, disulfide bonds have critical and distinct roles in secretion and activity. Loss of each conserved cysteine in WNT3A results in high molecular weight oxidized Wnt oligomers, which are formed through inter-Wnt disulfide bonding. Palmitoleoylation by PORCN is required for efficient binding to frizzled receptors. Palmitoleoylation is required for proper trafficking to cell surface, vacuolar acidification is critical to release palmitoleoylated WNT3A from WLS in secretory vesicles. Depalmitoleoylated by NOTUM, leading to inhibit Wnt signaling pathway, possibly by promoting disulfide bond formation and oligomerization. In terms of tissue distribution, dorsal portion of the neural tube (developing roof plate), and mesenchyme tissue surrounding the umbilical veins.

It is found in the secreted. The protein localises to the extracellular space. The protein resides in the extracellular matrix. Functionally, ligand for members of the frizzled family of seven transmembrane receptors. Functions in the canonical Wnt signaling pathway that results in activation of transcription factors of the TCF/LEF family. Required for normal embryonic mesoderm development and formation of caudal somites. Required for normal morphogenesis of the developing neural tube. Mediates self-renewal of the stem cells at the bottom on intestinal crypts (in vitro). This Mus musculus (Mouse) protein is Protein Wnt-3a (Wnt3a).